The sequence spans 26 residues: Thrombopoietin (26 aa).

The protein belongs to the EPO/TPO family.

Its subcellular location is the secreted. Functionally, lineage-specific cytokine affecting the proliferation and maturation of megakaryocytes from their committed progenitor cells. It acts at a late stage of megakaryocyte development. It may be the major physiological regulator of circulating platelets. The sequence is that of Thrombopoietin (THPO) from Sus scrofa (Pig).